A 326-amino-acid polypeptide reads, in one-letter code: Tagatose 1,6-diphosphate aldolase (326 aa).

This sequence belongs to the aldolase LacD family.

It carries out the reaction D-tagatofuranose 1,6-bisphosphate = D-glyceraldehyde 3-phosphate + dihydroxyacetone phosphate. It functions in the pathway carbohydrate metabolism; D-tagatose 6-phosphate degradation; D-glyceraldehyde 3-phosphate and glycerone phosphate from D-tagatose 6-phosphate: step 2/2. This is Tagatose 1,6-diphosphate aldolase from Staphylococcus aureus (strain Mu3 / ATCC 700698).